Here is a 342-residue protein sequence, read N- to C-terminus: Galactose mutarotase (342 aa).

Ala2 is subject to N-acetylalanine. Ser14 carries the phosphoserine modification. Beta-D-galactose-binding positions include 81–82 (NR) and His107. Ser124 carries the phosphoserine modification. The active-site Proton donor is His176. Residues 176–178 (HSY), Asp243, Gln279, and Glu307 each bind beta-D-galactose. Glu307 (proton acceptor) is an active-site residue.

This sequence belongs to the aldose epimerase family. As to quaternary structure, monomer.

The protein localises to the cytoplasm. The enzyme catalyses alpha-D-galactose = beta-D-galactose. It catalyses the reaction alpha-D-glucose = beta-D-glucose. It functions in the pathway carbohydrate metabolism; hexose metabolism. Its pathway is carbohydrate metabolism; galactose metabolism. Its function is as follows. Mutarotase that catalyzes the interconversion of beta-D-galactose and alpha-D-galactose during galactose metabolism. Beta-D-galactose is metabolized in the liver into glucose 1-phosphate, the primary metabolic fuel, by the action of four enzymes that constitute the Leloir pathway: GALM, GALK1 (galactokinase), GALT (galactose-1-phosphate uridylyltransferase) and GALE (UDP-galactose-4'-epimerase). Involved in the maintenance of the equilibrium between the beta- and alpha-anomers of galactose, therefore ensuring a sufficient supply of the alpha-anomer for GALK1. Also active on D-glucose although shows a preference for galactose over glucose. The protein is Galactose mutarotase (GALM) of Pongo abelii (Sumatran orangutan).